We begin with the raw amino-acid sequence, 361 residues long: Phospho-N-acetylmuramoyl-pentapeptide-transferase (361 aa).

Helical transmembrane passes span 27-47, 72-92, 99-119, 139-159, 169-189, 200-220, 240-260, 264-284, 289-309, and 338-358; these read GALFTAGLFVFWFGPWIISLL, TPTMGGLMILAGLLVAVFLWA, VWITVVVTLGFGAIGFYDDYL, ALIAVAACVAVAEYSAPGLAY, AIVNLGLFWIFFASFVIVGAG, GLAIVPVMIAAATFGIIAYLV, LAVVCGALIGAGLGFLWFNAP, IFMGDTGSLALGGLLGTVAVA, IVLAVVGGLFVLEIASVIIQV, and QVVIRFWIIAVVLALLGLATL.

Belongs to the glycosyltransferase 4 family. MraY subfamily. The cofactor is Mg(2+).

It is found in the cell inner membrane. The enzyme catalyses UDP-N-acetyl-alpha-D-muramoyl-L-alanyl-gamma-D-glutamyl-meso-2,6-diaminopimeloyl-D-alanyl-D-alanine + di-trans,octa-cis-undecaprenyl phosphate = di-trans,octa-cis-undecaprenyl diphospho-N-acetyl-alpha-D-muramoyl-L-alanyl-D-glutamyl-meso-2,6-diaminopimeloyl-D-alanyl-D-alanine + UMP. It participates in cell wall biogenesis; peptidoglycan biosynthesis. Functionally, catalyzes the initial step of the lipid cycle reactions in the biosynthesis of the cell wall peptidoglycan: transfers peptidoglycan precursor phospho-MurNAc-pentapeptide from UDP-MurNAc-pentapeptide onto the lipid carrier undecaprenyl phosphate, yielding undecaprenyl-pyrophosphoryl-MurNAc-pentapeptide, known as lipid I. This Methylobacterium sp. (strain 4-46) protein is Phospho-N-acetylmuramoyl-pentapeptide-transferase.